The primary structure comprises 322 residues: F-actin-capping protein subunit beta (322 aa).

Belongs to the F-actin-capping protein beta subunit family. In terms of assembly, component of the F-actin capping complex, composed of a heterodimer of an alpha and a beta subunit.

It is found in the cytoplasm. The protein localises to the cytoskeleton. The protein resides in the actin patch. F-actin-capping proteins bind in a Ca(2+)-independent manner to the fast growing ends of actin filaments (barbed end) thereby blocking the exchange of subunits at these ends. Unlike other capping proteins (such as gelsolin and severin), these proteins do not sever actin filaments. The sequence is that of F-actin-capping protein subunit beta (cap2) from Aspergillus fumigatus (strain ATCC MYA-4609 / CBS 101355 / FGSC A1100 / Af293) (Neosartorya fumigata).